The sequence spans 130 residues: Large ribosomal subunit protein bL20 (130 aa).

This sequence belongs to the bacterial ribosomal protein bL20 family.

Its function is as follows. Binds directly to 23S ribosomal RNA and is necessary for the in vitro assembly process of the 50S ribosomal subunit. It is not involved in the protein synthesizing functions of that subunit. This Clavibacter michiganensis subsp. michiganensis (strain NCPPB 382) protein is Large ribosomal subunit protein bL20.